The sequence spans 514 residues: ATP synthase subunit alpha (514 aa).

Residue 169-176 participates in ATP binding; that stretch reads GDRQTGKT.

It belongs to the ATPase alpha/beta chains family. F-type ATPases have 2 components, CF(1) - the catalytic core - and CF(0) - the membrane proton channel. CF(1) has five subunits: alpha(3), beta(3), gamma(1), delta(1), epsilon(1). CF(0) has three main subunits: a(1), b(2) and c(9-12). The alpha and beta chains form an alternating ring which encloses part of the gamma chain. CF(1) is attached to CF(0) by a central stalk formed by the gamma and epsilon chains, while a peripheral stalk is formed by the delta and b chains.

It is found in the cell membrane. It carries out the reaction ATP + H2O + 4 H(+)(in) = ADP + phosphate + 5 H(+)(out). Its function is as follows. Produces ATP from ADP in the presence of a proton gradient across the membrane. The alpha chain is a regulatory subunit. This chain is ATP synthase subunit alpha, found in Buchnera aphidicola subsp. Baizongia pistaciae (strain Bp).